Here is a 243-residue protein sequence, read N- to C-terminus: Carboxy-S-adenosyl-L-methionine synthase (243 aa).

S-adenosyl-L-methionine is bound by residues Y40, 65–67, 90–91, 118–119, N133, and R200; these read GSS, DN, and DI.

This sequence belongs to the class I-like SAM-binding methyltransferase superfamily. Cx-SAM synthase family. As to quaternary structure, homodimer.

It carries out the reaction prephenate + S-adenosyl-L-methionine = carboxy-S-adenosyl-L-methionine + 3-phenylpyruvate + H2O. Catalyzes the conversion of S-adenosyl-L-methionine (SAM) to carboxy-S-adenosyl-L-methionine (Cx-SAM). This chain is Carboxy-S-adenosyl-L-methionine synthase, found in Shewanella denitrificans (strain OS217 / ATCC BAA-1090 / DSM 15013).